A 516-amino-acid polypeptide reads, in one-letter code: Multicopper oxidase CueO (516 aa).

A signal peptide (tat-type signal) is located at residues 1 to 28 (MQRRDFLKYSVALGVASALPLWSRAVFA). Plastocyanin-like domains are found at residues 55–165 (GQST…IEDD), 227–292 (PRGW…DNKP), and 399–516 (GGKF…GFTV). Positions 101, 103, 141, and 143 each coordinate Cu cation. 7 residues coordinate Cu cation: His-443, His-446, His-448, His-499, Cys-500, His-501, and His-505.

It belongs to the multicopper oxidase family. In terms of assembly, monomer. The cofactor is Cu cation. Post-translationally, predicted to be exported by the Tat system. The position of the signal peptide cleavage has not been experimentally proven.

The protein resides in the periplasm. It catalyses the reaction 4 Cu(+) + O2 + 4 H(+) = 4 Cu(2+) + 2 H2O. Functionally, multicopper oxidase involved in copper homeostasis and copper tolerance under aerobic conditions. Is responsible for the oxidation of Cu(+) to the less harmful Cu(2+) in the periplasm, thereby preventing Cu(+) from entering the cytoplasm. The chain is Multicopper oxidase CueO (cueO) from Escherichia coli O157:H7.